Consider the following 833-residue polypeptide: Scavenger receptor class F member 2 (833 aa).

Positions 1–33 (MEGAGSRGAGPARRQGARGLGLLLLLWLLPGLA) are cleaved as a signal peptide. Residues 34–433 (APQDLNPRGR…ACHLETNQRK (400 aa)) are Extracellular-facing. EGF-like domains are found at residues 63-102 (LGDE…ANCD), 114-145 (CKER…ARCE), 140-174 (WGAR…AQCA), 175-204 (SACY…RSCN), 205-233 (NQCA…ARCD), and 228-262 (FGAR…KYCR). Intrachain disulfides connect cysteine 67–cysteine 78, cysteine 72–cysteine 90, cysteine 92–cysteine 101, cysteine 118–cysteine 126, cysteine 120–cysteine 133, cysteine 135–cysteine 144, cysteine 148–cysteine 155, cysteine 150–cysteine 162, cysteine 164–cysteine 173, cysteine 177–cysteine 185, cysteine 179–cysteine 192, cysteine 194–cysteine 203, cysteine 207–cysteine 214, cysteine 209–cysteine 221, cysteine 223–cysteine 232, cysteine 236–cysteine 243, cysteine 238–cysteine 250, and cysteine 252–cysteine 261. A glycan (N-linked (GlcNAc...) asparagine) is linked at asparagine 75. Residues asparagine 302 and asparagine 357 are each glycosylated (N-linked (GlcNAc...) asparagine). In terms of domain architecture, EGF-like 7 spans 364–395 (CAFVCSDCGSGHCDFQSGRCLCSPGVHGPHCN). 3 disulfides stabilise this stretch: cysteine 368–cysteine 376, cysteine 371–cysteine 383, and cysteine 385–cysteine 394. An N-linked (GlcNAc...) asparagine glycan is attached at asparagine 395. Residues 434–454 (GVMGAGALLTLLLGLLLSLLG) traverse the membrane as a helical segment. Over 455 to 833 (CCCACRGKDS…SRAGTAPGAS (379 aa)) the chain is Cytoplasmic. Serine 538 and serine 600 each carry phosphoserine. The segment at 578–833 (SLEPTGTSTP…SRAGTAPGAS (256 aa)) is disordered. Tyrosine 615 carries the post-translational modification Phosphotyrosine. The segment covering 619–630 (ARREARPARTRN) has biased composition (basic and acidic residues). 3 positions are modified to phosphoserine: serine 638, serine 640, and serine 695. Position 712 is a phosphothreonine (threonine 712). Residues 748–761 (ELRDKTRSLGRAEK) are compositionally biased toward basic and acidic residues. Residues 781–798 (ASASEASGSEKAAASAPA) show a composition bias toward low complexity. Residues 804–816 (KKTPIQKPPRKKS) are compositionally biased toward basic residues.

In terms of assembly, homophilic and heterophilic interaction via its extracellular domain. Interacts with SCARF1. The heterophilic interaction with SCARF1, which is stronger than the homophilic interaction with itself, is suppressed by the presence of SCARF1 ligand such as Ac-LDL.

Its subcellular location is the membrane. Probable adhesion protein, which mediates homophilic and heterophilic interactions. In contrast to SCARF1, it poorly mediates the binding and degradation of acetylated low density lipoprotein (Ac-LDL). This is Scavenger receptor class F member 2 (Scarf2) from Mus musculus (Mouse).